We begin with the raw amino-acid sequence, 101 residues long: Small ribosomal subunit protein bS6 (101 aa).

Belongs to the bacterial ribosomal protein bS6 family.

Functionally, binds together with bS18 to 16S ribosomal RNA. The polypeptide is Small ribosomal subunit protein bS6 (Staphylococcus saprophyticus subsp. saprophyticus (strain ATCC 15305 / DSM 20229 / NCIMB 8711 / NCTC 7292 / S-41)).